Here is a 141-residue protein sequence, read N- to C-terminus: ATP synthase epsilon chain (141 aa).

This sequence belongs to the ATPase epsilon chain family. In terms of assembly, F-type ATPases have 2 components, CF(1) - the catalytic core - and CF(0) - the membrane proton channel. CF(1) has five subunits: alpha(3), beta(3), gamma(1), delta(1), epsilon(1). CF(0) has three main subunits: a, b and c.

It localises to the cell membrane. In terms of biological role, produces ATP from ADP in the presence of a proton gradient across the membrane. This is ATP synthase epsilon chain from Lactococcus lactis subsp. cremoris (strain MG1363).